A 699-amino-acid chain; its full sequence is TBC1 domain family member 23 (699 aa).

The Rab-GAP TBC domain maps to proline 44–alanine 225. Phosphoserine is present on serine 300. The Rhodanese domain maps to glutamate 334–valine 446. The segment covering serine 459 to serine 479 has biased composition (polar residues). Positions serine 459–methionine 483 are disordered. Residues serine 469, serine 474, and serine 507 each carry the phosphoserine modification. Threonine 514 carries the phosphothreonine modification. Residues threonine 514–aspartate 573 are may mediate the interaction with C17orf75, FAM91A1 and WDR11. The segment at threonine 514–serine 699 is may mediate the interaction with WASHC1. 2 positions are modified to phosphoserine: serine 520 and serine 571. The may mediate the interaction with FKBP15 and WASHC2; required for endosome to Golgi trafficking stretch occupies residues aspartate 574–serine 699.

Directly interacts with GOLGA1 and GOLGA4. Interacts with FAM91A1, C17ORF75 and WDR11; the interaction recruits TBC1D23 to AP-1-derived vesicles. Directly interacts with WASHC1 and WASHC2A/FAM21A. Interacts with FKBP15. In terms of tissue distribution, isoform 1: Widely expressed, including in fetal adult brain (corpus callosum, pons, cerebellum), spinal cord, heart, skeletal muscle, thymus and bone marrow, and at lower levels in spleen. Hardly detected in liver, kidney, colon and testis. Isoform 2: Expressed at high levels in liver, kidney, colon and testis. Hardly detected in tissues expressing high levels of isoform 1. Expressed at low levels in spleen.

It is found in the golgi apparatus. The protein localises to the trans-Golgi network. It localises to the cytoplasmic vesicle. Its function is as follows. Putative Rab GTPase-activating protein which plays a role in vesicular trafficking. Involved in endosome-to-Golgi trafficking. Acts as a bridging protein by binding simultaneously to golgins, including GOLGA1 and GOLGA4, located at the trans-Golgi, and to the WASH complex, located on endosome-derived vesicles. Together with WDR11 complex facilitates the golgin-mediated capture of vesicles generated using AP-1. Plays a role in brain development, including in cortical neuron positioning. May also be important for neurite outgrowth, possibly through its involvement in membrane trafficking and cargo delivery, 2 processes that are essential for axonal and dendritic growth. May act as a general inhibitor of innate immunity signaling, strongly inhibiting multiple TLR and dectin/CLEC7A-signaling pathways. Does not alter initial activation events, but instead affects maintenance of inflammatory gene expression several hours after bacterial lipopolysaccharide (LPS) challenge. The protein is TBC1 domain family member 23 (TBC1D23) of Homo sapiens (Human).